We begin with the raw amino-acid sequence, 187 residues long: Corticoliberin (187 aa).

The first 24 residues, 1 to 24 (MRLRLLVSAGMLLVALSPCLPCRA), serve as a signal peptide directing secretion. A propeptide spanning residues 25–144 (LLSRGSVSGA…HQGALERERR (120 aa)) is cleaved from the precursor. The tract at residues 75 to 95 (AARLSPNSTPLTAGRGSRPSH) is disordered. I185 is modified (isoleucine amide).

It belongs to the sauvagine/corticotropin-releasing factor/urotensin I family. As to quaternary structure, interacts (via C-terminus) with CRFR1 (via N-terminal extracellular domain). As to expression, produced by the hypothalamus.

The protein resides in the secreted. Functionally, hormone regulating the release of corticotropin from pituitary gland. Induces NLRP6 in intestinal epithelial cells, hence may influence gut microbiota profile. The polypeptide is Corticoliberin (Crh) (Rattus norvegicus (Rat)).